A 91-amino-acid polypeptide reads, in one-letter code: Large ribosomal subunit protein eL43 (91 aa).

The C4-type zinc-finger motif lies at 39-60; the sequence is CPFCGKDAMRRGAVGIWNCSKC.

The protein belongs to the eukaryotic ribosomal protein eL43 family.

In Ostertagia ostertagi (Brown stomach worm), this protein is Large ribosomal subunit protein eL43 (rpl-37a).